A 497-amino-acid chain; its full sequence is Serine hydroxymethyltransferase (497 aa).

(6S)-5,6,7,8-tetrahydrofolate contacts are provided by residues L176 and 180 to 182 (GHL). An N6-(pyridoxal phosphate)lysine modification is found at K289.

The protein belongs to the SHMT family. Homodimer. Pyridoxal 5'-phosphate serves as cofactor.

It is found in the cytoplasm. It catalyses the reaction (6R)-5,10-methylene-5,6,7,8-tetrahydrofolate + glycine + H2O = (6S)-5,6,7,8-tetrahydrofolate + L-serine. It participates in one-carbon metabolism; tetrahydrofolate interconversion. It functions in the pathway amino-acid biosynthesis; glycine biosynthesis; glycine from L-serine: step 1/1. Functionally, catalyzes the reversible interconversion of serine and glycine with tetrahydrofolate (THF) serving as the one-carbon carrier. This reaction serves as the major source of one-carbon groups required for the biosynthesis of purines, thymidylate, methionine, and other important biomolecules. Also exhibits THF-independent aldolase activity toward beta-hydroxyamino acids, producing glycine and aldehydes, via a retro-aldol mechanism. The polypeptide is Serine hydroxymethyltransferase (Chlamydia felis (strain Fe/C-56) (Chlamydophila felis)).